The chain runs to 276 residues: Nickel import system permease protein NikC (276 aa).

The next 5 membrane-spanning stretches (helical) occupy residues Leu-10–Ser-30, Leu-73–Phe-93, Phe-108–Phe-128, Ile-186–Ser-206, and Ile-238–Gly-258. One can recognise an ABC transmembrane type-1 domain in the interval Ala-69–Gly-258.

The protein belongs to the binding-protein-dependent transport system permease family. OppBC subfamily. As to quaternary structure, the complex is composed of two ATP-binding proteins (NikD and NikE), two transmembrane proteins (NikB and NikC) and a solute-binding protein (NikA).

Its subcellular location is the cell membrane. In terms of biological role, part of the ABC transporter complex NikABCDE (Opp2) involved in nickel import. Probably responsible for the translocation of the substrate across the membrane. In Staphylococcus aureus (strain Mu50 / ATCC 700699), this protein is Nickel import system permease protein NikC.